The sequence spans 667 residues: Gamma-tubulin complex component 4 (667 aa).

The segment at 425 to 445 (HKADATQAREGPSRETSPREA) is disordered.

This sequence belongs to the TUBGCP family. Component of the gamma-tubulin ring complex (gTuRC) consisting of TUBGCP2, TUBGCP3, TUBGCP4, TUBGCP5 and TUBGCP6 and gamma-tubulin TUBG1 or TUBG2. TUBGCP2, TUBGCP3, TUBGCP4, TUBGCP5 and TUBGCP6 assemble in a 5:5:2:1:1 stoichiometry; each is associated with a gamma-tubulin, thereby arranging 14 gamma-tubulins in a helical manner. Gamma-tubulin at the first position is blocked by TUBGCP3 at the last position, allowing 13 protafilaments to grow into a microtubule. The gTuRC (via TUBGCP3 and TUBGCP6) interacts with ACTB and MZT1; the interactions form a luminal bridge that stabilizes the initial structure during complex assembly. The gTuRC (via TUBGCP2) interacts with MZT2A/MZT2B and CDK5RAP2 (via CM1 motif); the interactions play a role in gTuRC activation. Interacts with NINL. Interacts with ATF5; the ATF5:PCNT:polyglutamylated tubulin (PGT) tripartite unites the mother centriole and the pericentriolar material (PCM) in the centrosome. In terms of tissue distribution, ubiquitously expressed.

It is found in the cytoplasm. It localises to the cytoskeleton. Its subcellular location is the microtubule organizing center. The protein resides in the centrosome. Component of the gamma-tubulin ring complex (gTuRC) which mediates microtubule nucleation. The gTuRC regulates the minus-end nucleation of alpha-beta tubulin heterodimers that grow into microtubule protafilaments, a critical step in centrosome duplication and spindle formation. This chain is Gamma-tubulin complex component 4 (TUBGCP4), found in Homo sapiens (Human).